Consider the following 95-residue polypeptide: Leukocyte-specific transcript 1 protein (95 aa).

A helical transmembrane segment spans residues Leu22–Phe42. Ser64 carries the post-translational modification Phosphoserine.

The protein belongs to the LST1 family. In terms of tissue distribution, expressed in spleen and at lower levels in thymus and liver.

The protein localises to the membrane. Its function is as follows. Possible role in modulating immune responses. Has an inhibitory effect on lymphocyte proliferation. Induces morphological changes including production of filopodia and microspikes when overexpressed in a variety of cell types and may be involved in dendritic cell maturation. This is Leukocyte-specific transcript 1 protein (Lst1) from Mus musculus (Mouse).